The chain runs to 259 residues: DNA-directed RNA polymerase 30 kDa polypeptide (259 aa).

Residues 155–195 (YNTPCPNCKSRNTTPMMIQTRAADEPPLVRHACRDCKQHFK) form a TFIIS-type zinc finger. Residues cysteine 159, cysteine 162, cysteine 187, and cysteine 190 each contribute to the Zn(2+) site. The interval 214–259 (ENKEITEILPDNNPSPPESPEPASPIDDGLIRSTFDRNDEPPEDDE) is disordered. Pro residues predominate over residues 226-236 (NPSPPESPEPA).

This sequence belongs to the poxviridae DNA-directed RNA polymerase 30 kDa subunit family. As to quaternary structure, the DNA-dependent RNA polymerase (vRNAP) consists of eight subunits encoded by early viral genes and termed according to their apparent molecular masses Rpo147, Rpo132, Rpo35, Rpo30, Rpo22, Rpo19, Rpo18, and Rpo7. The same holoenzyme, with the addition of the transcription-specificity factor RAP94, is used for early gene expression.

It localises to the virion. Its subcellular location is the host cytoplasm. The enzyme catalyses RNA(n) + a ribonucleoside 5'-triphosphate = RNA(n+1) + diphosphate. Its function is as follows. Part of the DNA-dependent RNA polymerase which catalyzes the transcription of viral DNA into RNA using the four ribonucleoside triphosphates as substrates. Responsible for the transcription of early, intermediate and late genes. DNA-dependent RNA polymerase associates with the early transcription factor (ETF), itself composed of OPG118/D6 and OPG134/A8, thereby allowing the early genes transcription. Late transcription, and probably also intermediate transcription, require newly synthesized RNA polymerase. This chain is DNA-directed RNA polymerase 30 kDa polypeptide (OPG066), found in Homo sapiens (Human).